The following is a 40-amino-acid chain: Dermonecrotic toxin LgSicTox-alphaI-1 (40 aa).

Residues E32 and D34 each contribute to the Mg(2+) site.

It belongs to the arthropod phospholipase D family. Class II subfamily. Mg(2+) is required as a cofactor. Post-translationally, contains 2 disulfide bonds. As to expression, expressed by the venom gland.

Its subcellular location is the secreted. The catalysed reaction is an N-(acyl)-sphingosylphosphocholine = an N-(acyl)-sphingosyl-1,3-cyclic phosphate + choline. It catalyses the reaction an N-(acyl)-sphingosylphosphoethanolamine = an N-(acyl)-sphingosyl-1,3-cyclic phosphate + ethanolamine. The enzyme catalyses a 1-acyl-sn-glycero-3-phosphocholine = a 1-acyl-sn-glycero-2,3-cyclic phosphate + choline. It carries out the reaction a 1-acyl-sn-glycero-3-phosphoethanolamine = a 1-acyl-sn-glycero-2,3-cyclic phosphate + ethanolamine. In terms of biological role, dermonecrotic toxins cleave the phosphodiester linkage between the phosphate and headgroup of certain phospholipids (sphingolipid and lysolipid substrates), forming an alcohol (often choline) and a cyclic phosphate. This toxin acts on sphingomyelin (SM). It may also act on ceramide phosphoethanolamine (CPE), lysophosphatidylcholine (LPC) and lysophosphatidylethanolamine (LPE), but not on lysophosphatidylserine (LPS), and lysophosphatidylglycerol (LPG). It acts by transphosphatidylation, releasing exclusively cyclic phosphate products as second products. In vivo, intradermal injection induces dermonecrosis. Induces, hemolysis, vascular permeability, edema, inflammatory response, and platelet aggregation. In Loxosceles gaucho (Spider), this protein is Dermonecrotic toxin LgSicTox-alphaI-1.